The following is a 160-amino-acid chain: Phosphopantetheine adenylyltransferase (160 aa).

Substrate is bound at residue serine 9. ATP contacts are provided by residues 9-10 (SF) and histidine 17. Substrate is bound by residues lysine 41, leucine 73, and arginine 87. ATP contacts are provided by residues 88-90 (GLR), glutamate 98, and 123-129 (YTFLSSS).

The protein belongs to the bacterial CoaD family. In terms of assembly, homohexamer. The cofactor is Mg(2+).

It localises to the cytoplasm. The catalysed reaction is (R)-4'-phosphopantetheine + ATP + H(+) = 3'-dephospho-CoA + diphosphate. The protein operates within cofactor biosynthesis; coenzyme A biosynthesis; CoA from (R)-pantothenate: step 4/5. In terms of biological role, reversibly transfers an adenylyl group from ATP to 4'-phosphopantetheine, yielding dephospho-CoA (dPCoA) and pyrophosphate. In Dictyoglomus turgidum (strain DSM 6724 / Z-1310), this protein is Phosphopantetheine adenylyltransferase.